Reading from the N-terminus, the 159-residue chain is Transcriptional repressor NrdR (159 aa).

The segment at 3–34 is a zinc-finger region; it reads CPFCRHEDTQVVDSRVSEDGAAIRRRRRCSAC. In terms of domain architecture, ATP-cone spans 49 to 139; that stretch reads PAVVKKDGSR…VYRRFEDVSE (91 aa).

It belongs to the NrdR family. The cofactor is Zn(2+).

In terms of biological role, negatively regulates transcription of bacterial ribonucleotide reductase nrd genes and operons by binding to NrdR-boxes. The chain is Transcriptional repressor NrdR from Burkholderia vietnamiensis (strain G4 / LMG 22486) (Burkholderia cepacia (strain R1808)).